A 432-amino-acid polypeptide reads, in one-letter code: 3-phosphoshikimate 1-carboxyvinyltransferase (432 aa).

The 3-phosphoshikimate site is built by Lys22, Ser23, and Arg27. Lys22 lines the phosphoenolpyruvate pocket. 2 residues coordinate phosphoenolpyruvate: Gly96 and Arg127. Positions 173, 174, 175, 201, 316, 339, and 343 each coordinate 3-phosphoshikimate. Gln175 is a phosphoenolpyruvate binding site. Asp316 acts as the Proton acceptor in catalysis. Residues Arg347, Arg391, and Lys416 each contribute to the phosphoenolpyruvate site.

The protein belongs to the EPSP synthase family. In terms of assembly, monomer.

It is found in the cytoplasm. The catalysed reaction is 3-phosphoshikimate + phosphoenolpyruvate = 5-O-(1-carboxyvinyl)-3-phosphoshikimate + phosphate. It functions in the pathway metabolic intermediate biosynthesis; chorismate biosynthesis; chorismate from D-erythrose 4-phosphate and phosphoenolpyruvate: step 6/7. Catalyzes the transfer of the enolpyruvyl moiety of phosphoenolpyruvate (PEP) to the 5-hydroxyl of shikimate-3-phosphate (S3P) to produce enolpyruvyl shikimate-3-phosphate and inorganic phosphate. The protein is 3-phosphoshikimate 1-carboxyvinyltransferase of Haemophilus influenzae (strain 86-028NP).